The chain runs to 97 residues: MAAAKPENLSLVVHGPGDLRLENYPIPEPGPNXVLLKMHSVGICGSDVHYWQHGRIGNFVVKKPMVLGHEASGTXVKVGSLVTHLKPGDRXAXEPGA.

Residue Cys-44 coordinates Zn(2+). Tyr-50 is a binding site for substrate. Zn(2+) contacts are provided by His-69 and Glu-70.

Belongs to the zinc-containing alcohol dehydrogenase family. Homotetramer. Zn(2+) serves as cofactor.

It is found in the mitochondrion membrane. It localises to the cell projection. Its subcellular location is the cilium. The protein resides in the flagellum. The catalysed reaction is xylitol + NAD(+) = D-xylulose + NADH + H(+). It carries out the reaction L-iditol + NAD(+) = keto-L-sorbose + NADH + H(+). It catalyses the reaction keto-D-fructose + NADH + H(+) = D-sorbitol + NAD(+). In terms of biological role, polyol dehydrogenase that catalyzes the reversible NAD(+)-dependent oxidation of various sugar alcohols. Is active with xylitol, L-iditol and D-sorbitol (D-glucitol) as substrates, leading to the C2-oxidized products D-xylulose, L-sorbose and D-fructose, respectively. Is a key enzyme in the polyol pathway that interconverts glucose and fructose via sorbitol, which constitutes an important alternate route for glucose metabolism. May play a role in sperm motility by using sorbitol as an alternative energy source for sperm motility. This is Sorbitol dehydrogenase (SORD) from Sus scrofa (Pig).